A 91-amino-acid polypeptide reads, in one-letter code: Small ribosomal subunit protein bS16 (91 aa).

Belongs to the bacterial ribosomal protein bS16 family.

In Ruthia magnifica subsp. Calyptogena magnifica, this protein is Small ribosomal subunit protein bS16.